A 197-amino-acid polypeptide reads, in one-letter code: Large ribosomal subunit protein bL25 (197 aa).

The protein belongs to the bacterial ribosomal protein bL25 family. CTC subfamily. As to quaternary structure, part of the 50S ribosomal subunit; part of the 5S rRNA/L5/L18/L25 subcomplex. Contacts the 5S rRNA. Binds to the 5S rRNA independently of L5 and L18.

This is one of the proteins that binds to the 5S RNA in the ribosome where it forms part of the central protuberance. This is Large ribosomal subunit protein bL25 from Pseudomonas putida (strain ATCC 700007 / DSM 6899 / JCM 31910 / BCRC 17059 / LMG 24140 / F1).